Reading from the N-terminus, the 554-residue chain is (E)-beta-caryophyllene synthase (554 aa).

Mn(2+) contacts are provided by Asp-313 and Asp-317. Residues 313 to 317 (DDIYD) carry the DDXXD motif motif. Homodimerization regions lie at residues 319–325 (YGTLDEL) and 391–427 (EAQW…LAVI). Mn(2+)-binding residues include Asp-457 and Glu-465.

It belongs to the terpene synthase family. In terms of assembly, homodimer. Requires Mn(2+) as cofactor. It depends on Mg(2+) as a cofactor. In terms of tissue distribution, expressed in peltate glandular trichomes. Present at low levels in flowers, leaves and stems.

It catalyses the reaction (2E,6E)-farnesyl diphosphate = (-)-(E)-beta-caryophyllene + diphosphate. The catalysed reaction is (2E,6E)-farnesyl diphosphate = alpha-humulene + diphosphate. Its pathway is secondary metabolite biosynthesis; terpenoid biosynthesis. Functionally, involved in the biosynthesis of phenolic sesquiterpenes natural products. Sesquiterpene synthase converting (2E,6E)-farnesyl diphosphate (FPP) to (E)-beta-caryophyllene and alpha-humulene. This chain is (E)-beta-caryophyllene synthase, found in Origanum vulgare (Wild marjoram).